An 838-amino-acid polypeptide reads, in one-letter code: Probable glucan 1,3-beta-glucosidase D (838 aa).

A compositionally biased stretch (basic and acidic residues) spans 1 to 23 (MPSHSRSRDRYRGRDESEPERDR). Positions 1–298 (MPSHSRSRDR…GASDSDMDGA (298 aa)) are disordered. Topologically, residues 1 to 310 (MPSHSRSRDR…GTPFWKKKKT (310 aa)) are cytoplasmic. Acidic residues predominate over residues 35–45 (DYEDDELDDDD). Composition is skewed to basic and acidic residues over residues 111-124 (DSPRRRDRHRDGDR), 149-164 (SRDDRRERAYESEREA), 200-221 (AKLRSEYDKEDRSRAKADAKAE), and 234-246 (QPRRLDPFPEETP). The helical; Signal-anchor for type II membrane protein transmembrane segment at 311–331 (WIAVGVVVVLLAIIIPVAVVV) threads the bilayer. At 332 to 838 (SKKNNEKKSD…PDFGDLPENY (507 aa)) the chain is on the extracellular side. The segment at 335 to 359 (NNEKKSDSTTDDTTPRNSNLDGISR) is disordered. N-linked (GlcNAc...) asparagine glycans are attached at residues Asn-383, Asn-388, Asn-400, Asn-553, and Asn-565. Glu-604 functions as the Proton donor in the catalytic mechanism. Residues Asn-643 and Asn-696 are each glycosylated (N-linked (GlcNAc...) asparagine). The active-site Nucleophile is the Glu-709.

It belongs to the glycosyl hydrolase 5 (cellulase A) family.

It is found in the cell membrane. It catalyses the reaction Successive hydrolysis of beta-D-glucose units from the non-reducing ends of (1-&gt;3)-beta-D-glucans, releasing alpha-glucose.. Glucosidase involved in the degradation of cellulosic biomass. Active on lichenan. This is Probable glucan 1,3-beta-glucosidase D (exgD) from Aspergillus terreus (strain NIH 2624 / FGSC A1156).